The chain runs to 517 residues: Ladinin-1 (517 aa).

The disordered stretch occupies residues methionine 1–threonine 401. Serine 38 carries the phosphoserine modification. Residues leucine 48–alanine 58 are compositionally biased toward polar residues. Residues serine 64, serine 78, serine 121, and serine 123 each carry the phosphoserine modification. Positions asparagine 120–proline 131 are enriched in polar residues. 2 stretches are compositionally biased toward basic and acidic residues: residues serine 134–arginine 151 and leucine 161–proline 174. 8 SEK repeats span residues serine 203–lysine 205, serine 209–lysine 211, serine 215–lysine 217, serine 221–lysine 223, serine 227–lysine 229, serine 239–lysine 241, serine 257–lysine 259, and serine 269–lysine 271. Residues serine 203–lysine 271 form an 8 X SEK repeats region. Basic and acidic residues predominate over residues alanine 219–leucine 233. Residues serine 347, serine 356, and serine 394 each carry the phosphoserine modification. Positions serine 355 to threonine 373 are enriched in polar residues. Arginine 424 carries the post-translational modification Omega-N-methylarginine. Positions arginine 481 to valine 517 are disordered. At serine 485 the chain carries Phosphoserine. Polar residues predominate over residues glutamine 494–valine 517.

The protein resides in the secreted. It is found in the extracellular space. Its subcellular location is the extracellular matrix. The protein localises to the basement membrane. In terms of biological role, anchoring filament protein which is a component of the basement membrane zone. This Homo sapiens (Human) protein is Ladinin-1 (LAD1).